The chain runs to 351 residues: MSDIMSNFSWLYGKPVATGKLKQLPEHFIVKEILGFEFTGNGEHLMVKIRKTGENTKYVANELAKFCGVKSKNVSWAGLKDRHAVTEQWLSVQVANSDELNFAKFEATHPGVEILEVTRHNKKLRPGDLQGNQFQVIATEVTDIDDVLARLEKVKLAGVPNYFGSQRFGHEGNNVNEARRWGRDNVRTRDNSKRSFYLSAARSWIFNHIVSQRITEGYFSQPVDGDILLDRNDRIVNENVTSEESIQKIQNGELSITAALAGDNQLPTTGTALTLEQPHLDAEPDLMALIRGNRMRHERRAIELHPENLTWSAEGDTLTLNFSLTSGSFATVIVRELLQEIEVERTYSSND.

Asp-81 acts as the Nucleophile in catalysis. The TRUD domain occupies 158 to 304 (GVPNYFGSQR…MRHERRAIEL (147 aa)).

This sequence belongs to the pseudouridine synthase TruD family.

It catalyses the reaction uridine(13) in tRNA = pseudouridine(13) in tRNA. Functionally, responsible for synthesis of pseudouridine from uracil-13 in transfer RNAs. The sequence is that of tRNA pseudouridine synthase D from Aliivibrio fischeri (strain ATCC 700601 / ES114) (Vibrio fischeri).